Reading from the N-terminus, the 723-residue chain is Ribosome quality control complex subunit 1 (723 aa).

Residues 21-125 form a disordered region; sequence SNSNANKMTS…DKGSDDDDDD (105 aa). Polar residues predominate over residues 27–37; it reads KMTSGKSTAGN. The span at 93-108 shows a compositional bias: basic residues; the sequence is SSRRKKNKKAKRKQKN. The segment covering 109–118 has biased composition (basic and acidic residues); it reads HTAEAAKDKG. Ser119 carries the post-translational modification Phosphoserine. The residue at position 158 (Thr158) is a Phosphothreonine. Phosphoserine is present on Ser160.

It belongs to the TCF25 family. Component of the ribosome quality control complex (RQC), composed of the E3 ubiquitin ligase RKR1/LTN1, RQC1 and RQC2, as well as CDC48 and its ubiquitin-binding cofactors. RQC forms a stable complex with 60S ribosomal subunits.

Its subcellular location is the cytoplasm. Functionally, component of the ribosome quality control complex (RQC), a ribosome-associated complex that mediates ubiquitination and extraction of incompletely synthesized nascent chains for proteasomal degradation. Within the RQC complex, RQC1 is essential for the recruitment of CDC48 to incompletely synthesized nascent polypeptides that are ubiquitinated by RKR1/LTN1. This is Ribosome quality control complex subunit 1 from Saccharomyces cerevisiae (strain ATCC 204508 / S288c) (Baker's yeast).